We begin with the raw amino-acid sequence, 318 residues long: Probable arabinan endo-1,5-alpha-L-arabinosidase C (318 aa).

Positions Met1–Ala28 are cleaved as a signal peptide. The active-site Proton acceptor is Asp30. 3 N-linked (GlcNAc...) asparagine glycosylation sites follow: Asn72, Asn80, and Asn188. Residue Glu196 is the Proton donor of the active site. An N-linked (GlcNAc...) asparagine glycan is attached at Asn277.

The protein belongs to the glycosyl hydrolase 43 family.

Its subcellular location is the secreted. The enzyme catalyses Endohydrolysis of (1-&gt;5)-alpha-arabinofuranosidic linkages in (1-&gt;5)-arabinans.. It participates in glycan metabolism; L-arabinan degradation. Endo-1,5-alpha-L-arabinanase involved in degradation of pectin. Its preferred substrate is linear 1,5-alpha-L-arabinan. The protein is Probable arabinan endo-1,5-alpha-L-arabinosidase C (abnC) of Aspergillus niger (strain ATCC MYA-4892 / CBS 513.88 / FGSC A1513).